The sequence spans 185 residues: Threonylcarbamoyl-AMP synthase (185 aa).

In terms of domain architecture, YrdC-like spans 4-185 (SFRAQCAARV…LVTGQVIRPA (182 aa)).

It belongs to the SUA5 family. TsaC subfamily.

The protein resides in the cytoplasm. It catalyses the reaction L-threonine + hydrogencarbonate + ATP = L-threonylcarbamoyladenylate + diphosphate + H2O. Required for the formation of a threonylcarbamoyl group on adenosine at position 37 (t(6)A37) in tRNAs that read codons beginning with adenine. Catalyzes the conversion of L-threonine, HCO(3)(-)/CO(2) and ATP to give threonylcarbamoyl-AMP (TC-AMP) as the acyladenylate intermediate, with the release of diphosphate. The polypeptide is Threonylcarbamoyl-AMP synthase (Pseudomonas aeruginosa (strain UCBPP-PA14)).